Consider the following 61-residue polypeptide: Small ribosomal subunit protein uS14 (61 aa).

Zn(2+) contacts are provided by Cys24, Cys27, Cys40, and Cys43.

Belongs to the universal ribosomal protein uS14 family. Zinc-binding uS14 subfamily. In terms of assembly, part of the 30S ribosomal subunit. Contacts proteins S3 and S10. The cofactor is Zn(2+).

Functionally, binds 16S rRNA, required for the assembly of 30S particles and may also be responsible for determining the conformation of the 16S rRNA at the A site. In Helicobacter pylori (strain G27), this protein is Small ribosomal subunit protein uS14.